A 196-amino-acid chain; its full sequence is Probable malonic semialdehyde reductase RutE (196 aa).

The protein belongs to the nitroreductase family. HadB/RutE subfamily. The cofactor is FMN.

It carries out the reaction 3-hydroxypropanoate + NADP(+) = 3-oxopropanoate + NADPH + H(+). In terms of biological role, may reduce toxic product malonic semialdehyde to 3-hydroxypropionic acid, which is excreted. The polypeptide is Probable malonic semialdehyde reductase RutE (Enterobacter sp. (strain 638)).